Consider the following 61-residue polypeptide: Potassium channel toxin alpha-KTx 6.9 (61 aa).

Residues 1–23 (MNAKFILLLLVVTTTTLLPDAKG) form the signal peptide. Disulfide bonds link Cys-29–Cys-50, Cys-35–Cys-55, Cys-39–Cys-57, and Cys-45–Cys-60.

Belongs to the short scorpion toxin superfamily. Potassium channel inhibitor family. Alpha-KTx 06 subfamily. In terms of tissue distribution, expressed by the venom gland.

It localises to the secreted. Functionally, inhibits Kv1.2/KCNA2 and Kv1.3/KCNA3 voltage-gated potassium channels. The protein is Potassium channel toxin alpha-KTx 6.9 of Opistophthalmus carinatus (African yellow leg scorpion).